A 402-amino-acid chain; its full sequence is Proline-rich protein 25 (402 aa).

Disordered regions lie at residues 1–29, 109–255, and 337–371; these read MARTDQKPPCRGGCWGQPGHPNTGGAAAH, TVPG…MVGS, and EAAQDPATRRTAPPRRTASPEPPAPGAPLPACPGR. Over residues 345–355 the composition is skewed to low complexity; sequence RRTAPPRRTAS. A compositionally biased stretch (pro residues) spans 356 to 367; that stretch reads PEPPAPGAPLPA.

This Homo sapiens (Human) protein is Proline-rich protein 25 (PRR25).